A 360-amino-acid polypeptide reads, in one-letter code: POU domain, class 5, transcription factor 1 (360 aa).

Disordered stretches follow at residues 1 to 48 and 86 to 137; these read MAGH…SGIG and PPGG…EESQ. The 9aaTAD motif lies at 4-12; the sequence is HLASDFAFS. Ser111 carries the phosphoserine; by MAPK modification. Lys123 participates in a covalent cross-link: Glycyl lysine isopeptide (Lys-Gly) (interchain with G-Cter in SUMO). Residues 123–137 show a composition bias toward basic and acidic residues; the sequence is KLDKEKLEPNPEESQ. One can recognise a POU-specific domain in the interval 138-212; it reads DIKALQKDLE…LLQKWVEEAD (75 aa). 2 residues coordinate DNA: Arg157 and Gln164. DNA-binding stretches follow at residues 180–186 and 193–196; these read SQTTICR and SFKN. The segment at residues 230–289 is a DNA-binding region (homeobox); it reads RKRKRTSIENRVRGNLESMFLQCPKPTLQQISHIAQQLGLEKDVVRVWFCNRRQKGKRSS. Phosphothreonine is present on Thr235. A phosphoserine mark is found at Ser236, Ser289, Ser290, and Ser355. The interval 287–322 is disordered; the sequence is RSSSDYSQREDFEAAGSPFTGGPVSSPLAPGPHFGT.

The protein belongs to the POU transcription factor family. Class-5 subfamily. Interacts with PKM. Interacts with WWP2. Interacts with UBE2I and ZSCAN10. Interacts with PCGF1. Interacts with ESRRB; recruits ESRRB near the POU5F1-SOX2 element in the NANOG proximal promoter; the interaction is DNA independent. Interacts with MAPK8 and MAPK9; the interaction allows MAPK8 and MAPK9 to phosphorylate POU5F1 on Ser-355. Interacts (when phosphorylated on Ser-355) with FBXW8. Interacts with FBXW4. Interacts with SOX2 and SOX15; binds synergistically with either SOX2 or SOX15 to DNA. Interacts with DDX56. Sumoylation enhances the protein stability, DNA binding and transactivation activity. Sumoylation is required for enhanced YES1 expression. Post-translationally, ubiquitinated; undergoes 'Lys-63'-linked polyubiquitination by WWP2 leading to proteasomal degradation. In terms of processing, ERK1/2-mediated phosphorylation at Ser-111 promotes nuclear exclusion and proteasomal degradation. Phosphorylation at Thr-235 and Ser-236 decrease DNA-binding and alters ability to activate transcription. Expressed in immature oocytes.

The protein resides in the cytoplasm. The protein localises to the nucleus. Functionally, transcription factor that binds to the octamer motif (5'-ATTTGCAT-3'). Forms a trimeric complex with SOX2 or SOX15 on DNA and controls the expression of a number of genes involved in embryonic development such as YES1, FGF4, UTF1 and ZFP206. Critical for early embryogenesis and for embryonic stem cell pluripotency. The protein is POU domain, class 5, transcription factor 1 (POU5F1) of Bos taurus (Bovine).